The chain runs to 1085 residues: Phosphorylase b kinase regulatory subunit beta (1085 aa).

Phosphoserine occurs at positions 10, 19, and 693. Calmodulin-binding stretches follow at residues 760–787 and 912–943; these read RVYR…VVDS and SGRC…ILER. C1082 is lipidated: S-farnesyl cysteine.

It belongs to the phosphorylase b kinase regulatory chain family. In terms of assembly, hexadecamer of 4 heterotetramers, each composed of alpha, beta, gamma, and delta subunits. Alpha (PHKA1 or PHKA2) and beta (PHKB) are regulatory subunits, gamma (PHKG1 or PHKG2) is the catalytic subunit, and delta is calmodulin. In terms of processing, although the final Cys may be farnesylated, the terminal tripeptide is probably not removed, and the C-terminus is not methylated.

The protein localises to the cell membrane. It participates in glycan biosynthesis; glycogen metabolism. Its activity is regulated as follows. By phosphorylation of various serine residues. Functionally, phosphorylase b kinase catalyzes the phosphorylation of serine in certain substrates, including troponin I. The beta chain acts as a regulatory unit and modulates the activity of the holoenzyme in response to phosphorylation. The protein is Phosphorylase b kinase regulatory subunit beta (Phkb) of Mus musculus (Mouse).